Reading from the N-terminus, the 2527-residue chain is Leucine-rich repeat serine/threonine-protein kinase 2 (2527 aa).

Residues 1-969 form a required for RAB29-mediated activation region; that stretch reads MASGSCQGCE…RSSKLQSHMR (969 aa). Residues 319-348 adopt a coiled-coil conformation; that stretch reads LTETIFLNQDLEEKNENQENDDEGEEDKLF. Residues serine 910, serine 935, serine 955, and serine 973 each carry the phosphoserine modification. LRR repeat units follow at residues 983–1004, 1012–1033, 1036–1057, 1059–1080, 1084–1105, 1108–1129, 1130–1150, 1156–1171, 1174–1196, 1197–1218, 1221–1245, 1246–1267, and 1269–1291; these read YITSLDLSANELRDIDALSQKC, HLEKLELHQNALTSFPQQLCET, SLTHLDLHSNKFTSFPSYLLKM, CIANLDVSRNDIGPSVVLDPTV, TLKQFNLSYNQLSFVPENLTDV, KLEQLILEGNKISGICSPLRLK, ELKILNLSKNHISSLSENFLE, ESFSARMNFLAAMPFL, SMTILKLSQNKFSCIPEAILNLP, HLRSLDMSSNDIQYLPGPAHWK, NLRELLFSHNQISILDLSEKAYLWS, RVEKLHLSHNKLKEIPPEIGCL, and NLTSLDVSYNLELRSFPNEMGKL. Serine 1292 carries the post-translational modification Phosphoserine; by autocatalysis. The Roc domain occupies 1328 to 1511; sequence KAVPYNRMKL…KTIINESLNF (184 aa). 1341–1348 provides a ligand contact to GTP; it reads GNTGSGKT. Residue serine 1444 is modified to Phosphoserine. Residues 1546–1740 form the COR domain; sequence PVIDRKRLLQ…RMYWRQGIYL (195 aa). A Protein kinase domain is found at 1879–2138; sequence QAPEFLLGDG…FDILNSAELV (260 aa). 12 residues coordinate ATP: leucine 1885, aspartate 1887, glycine 1888, glycine 1891, valine 1893, alanine 1904, lysine 1906, methionine 1947, glutamate 1948, alanine 1950, serine 1954, and arginine 1957. The active-site Proton acceptor is aspartate 1994. ATP contacts are provided by histidine 1998, leucine 2001, alanine 2016, and aspartate 2017. Position 2098–2121 (2098–2121) interacts with GTP; the sequence is EYGCAPWPMVEKLIKQCLKENPQE. WD repeat units follow at residues 2139–2183, 2188–2228, 2233–2276, 2281–2327, 2333–2377, 2402–2438, and 2443–2497; these read CLTR…SFLD, GYTS…LVIN, KKRH…AIFE, KLKG…FSFS, QKLI…EVWD, KESKHKMSYSGRVKTLCLQKNTALWIGTGGGHILLLD, and RLIR…TVWD. 2295 to 2298 contacts GTP; it reads NVST.

It belongs to the protein kinase superfamily. TKL Ser/Thr protein kinase family. In terms of assembly, homodimer. Homotetramer; when activated by GTP-bound RAB29. Interacts with PRKN, PRDX3, and TPCN2. Interacts with VPS35. Interacts (via N-terminus) with RAB29; this interaction is direct and stimulates kinase activity. Interacts (via ROC domain) with SEC16A. Interacts with APP; interaction promotes phosphorylation of 'Thr-743' of APP. Interacts with MAPT. Interacts with RAB8A, RAB10, and RAB12. Interacts (via N-terminus) with RAB32. Interacts with YWHAG; this interaction is dependent on phosphorylation of Ser-910 and either Ser-935 or Ser-1444. Interacts with SFN; this interaction is dependent on phosphorylation of Ser-910 and/or Ser-935. The cofactor is Mg(2+). Post-translationally, autophosphorylated at Ser-1292; autophosphorylation is stimulated by RAB29. Phosphorylation of Ser-910 and either Ser-935 or Ser-1444 facilitates interaction with YWHAG. Phosphorylation of Ser-910 and/or Ser-935 facilitates interaction with SFN. Ubiquitinated by TRIM1; undergoes 'Lys-48'-linked polyubiquitination leading to proteasomal degradation. Expressed in pyramidal neurons in all cortical laminae of the visual cortex, in neurons of the substantia nigra pars compacta and caudate putamen (at protein level). Expressed in neutrophils (at protein level). Expressed in the brain. Expressed throughout the adult brain, but at a lower level than in heart and liver. Also expressed in placenta, lung, skeletal muscle, kidney and pancreas. In the brain, expressed in the cerebellum, cerebral cortex, medulla, spinal cord occipital pole, frontal lobe, temporal lobe and putamen. Expression is particularly high in brain dopaminoceptive areas.

The protein localises to the cytoplasmic vesicle. Its subcellular location is the perikaryon. It localises to the golgi apparatus membrane. The protein resides in the cell projection. It is found in the axon. The protein localises to the dendrite. Its subcellular location is the endoplasmic reticulum membrane. It localises to the secretory vesicle. The protein resides in the synaptic vesicle membrane. It is found in the endosome. The protein localises to the lysosome. Its subcellular location is the mitochondrion outer membrane. It localises to the cytoplasm. The protein resides in the cytoskeleton. It is found in the phagosome. It catalyses the reaction L-threonyl-[protein] + ATP = O-phospho-L-threonyl-[protein] + ADP + H(+). It carries out the reaction L-seryl-[protein] + ATP = O-phospho-L-seryl-[protein] + ADP + H(+). The enzyme catalyses GTP + H2O = GDP + phosphate + H(+). Its activity is regulated as follows. Kinase activity is regulated by the GTPase activity of the ROC domain. GTP-bound LRRK2 kinase activity is stimulated by RAB29. Phosphorylation of RAB10 'Thr-73' is stimulated by RAB29 and RAB32. Inhibited by small molecule inhibitor MLi-2. Its function is as follows. Serine/threonine-protein kinase which phosphorylates a broad range of proteins involved in multiple processes such as neuronal plasticity, innate immunity, autophagy, and vesicle trafficking. Is a key regulator of RAB GTPases by regulating the GTP/GDP exchange and interaction partners of RABs through phosphorylation. Phosphorylates RAB3A, RAB3B, RAB3C, RAB3D, RAB5A, RAB5B, RAB5C, RAB8A, RAB8B, RAB10, RAB12, RAB29, RAB35, and RAB43. Regulates the RAB3IP-catalyzed GDP/GTP exchange for RAB8A through the phosphorylation of 'Thr-72' on RAB8A. Inhibits the interaction between RAB8A and GDI1 and/or GDI2 by phosphorylating 'Thr-72' on RAB8A. Regulates primary ciliogenesis through phosphorylation of RAB8A and RAB10, which promotes SHH signaling in the brain. Together with RAB29, plays a role in the retrograde trafficking pathway for recycling proteins, such as mannose-6-phosphate receptor (M6PR), between lysosomes and the Golgi apparatus in a retromer-dependent manner. Regulates neuronal process morphology in the intact central nervous system (CNS). Plays a role in synaptic vesicle trafficking. Plays an important role in recruiting SEC16A to endoplasmic reticulum exit sites (ERES) and in regulating ER to Golgi vesicle-mediated transport and ERES organization. Positively regulates autophagy through a calcium-dependent activation of the CaMKK/AMPK signaling pathway. The process involves activation of nicotinic acid adenine dinucleotide phosphate (NAADP) receptors, increase in lysosomal pH, and calcium release from lysosomes. Phosphorylates PRDX3. By phosphorylating APP on 'Thr-743', which promotes the production and the nuclear translocation of the APP intracellular domain (AICD), regulates dopaminergic neuron apoptosis. Acts as a positive regulator of innate immunity by mediating phosphorylation of RIPK2 downstream of NOD1 and NOD2, thereby enhancing RIPK2 activation. Independent of its kinase activity, inhibits the proteasomal degradation of MAPT, thus promoting MAPT oligomerization and secretion. In addition, has GTPase activity via its Roc domain which regulates LRRK2 kinase activity. Recruited by RAB29/RAB7L1 to overloaded lysosomes where it phosphorylates and stabilizes RAB8A and RAB10 which promote lysosomal content release and suppress lysosomal enlargement through the EHBP1 and EHBP1L1 effector proteins. The chain is Leucine-rich repeat serine/threonine-protein kinase 2 (LRRK2) from Homo sapiens (Human).